The following is a 261-amino-acid chain: NAD-capped RNA hydrolase NudC (261 aa).

Arginine 69 lines the substrate pocket. Residues cysteine 98 and cysteine 101 each contribute to the Zn(2+) site. Glutamate 111 contributes to the substrate binding site. Zn(2+) contacts are provided by cysteine 116 and cysteine 119. Tyrosine 124 is a binding site for substrate. The 124-residue stretch at 125–248 (PQIAPCIIVA…TVARRLIEDT (124 aa)) folds into the Nudix hydrolase domain. A divalent metal cation-binding residues include alanine 158, glutamate 174, and glutamate 178. The Nudix box signature appears at 159–180 (GFVEVGETLEQTVAREVMEESS). Residue 192 to 199 (QPWPFPQS) coordinates substrate. Glutamate 219 contributes to the a divalent metal cation binding site. Alanine 241 contributes to the substrate binding site.

Belongs to the Nudix hydrolase family. NudC subfamily. As to quaternary structure, homodimer. Requires Mg(2+) as cofactor. Mn(2+) is required as a cofactor. The cofactor is Zn(2+).

The enzyme catalyses a 5'-end NAD(+)-phospho-ribonucleoside in mRNA + H2O = a 5'-end phospho-adenosine-phospho-ribonucleoside in mRNA + beta-nicotinamide D-ribonucleotide + 2 H(+). The catalysed reaction is NAD(+) + H2O = beta-nicotinamide D-ribonucleotide + AMP + 2 H(+). It catalyses the reaction NADH + H2O = reduced beta-nicotinamide D-ribonucleotide + AMP + 2 H(+). Its function is as follows. mRNA decapping enzyme that specifically removes the nicotinamide adenine dinucleotide (NAD) cap from a subset of mRNAs by hydrolyzing the diphosphate linkage to produce nicotinamide mononucleotide (NMN) and 5' monophosphate mRNA. The NAD-cap is present at the 5'-end of some mRNAs and stabilizes RNA against 5'-processing. Has preference for mRNAs with a 5'-end purine. Catalyzes the hydrolysis of a broad range of dinucleotide pyrophosphates. The sequence is that of NAD-capped RNA hydrolase NudC from Erwinia tasmaniensis (strain DSM 17950 / CFBP 7177 / CIP 109463 / NCPPB 4357 / Et1/99).